The chain runs to 426 residues: Enolase (426 aa).

Glutamine 162 is a (2R)-2-phosphoglycerate binding site. The active-site Proton donor is glutamate 204. Mg(2+) contacts are provided by aspartate 241, glutamate 284, and aspartate 311. Residues lysine 336, arginine 365, serine 366, and lysine 387 each contribute to the (2R)-2-phosphoglycerate site. Lysine 336 acts as the Proton acceptor in catalysis.

This sequence belongs to the enolase family. Component of the RNA degradosome, a multiprotein complex involved in RNA processing and mRNA degradation. Mg(2+) is required as a cofactor.

Its subcellular location is the cytoplasm. It is found in the secreted. The protein localises to the cell surface. It carries out the reaction (2R)-2-phosphoglycerate = phosphoenolpyruvate + H2O. It participates in carbohydrate degradation; glycolysis; pyruvate from D-glyceraldehyde 3-phosphate: step 4/5. In terms of biological role, catalyzes the reversible conversion of 2-phosphoglycerate (2-PG) into phosphoenolpyruvate (PEP). It is essential for the degradation of carbohydrates via glycolysis. The polypeptide is Enolase (Hydrogenovibrio crunogenus (strain DSM 25203 / XCL-2) (Thiomicrospira crunogena)).